The following is a 435-amino-acid chain: Hexane cyclase xenF (435 aa).

A signal peptide spans M1–A23. N-linked (GlcNAc...) asparagine glycans are attached at residues N81 and N156.

It belongs to the Diels-Alderase family.

Its pathway is mycotoxin biosynthesis. Hexane cyclase; part of the gene cluster that mediates the biosynthesis of xenoacremones such as xenoacremone A, a compound that shows inhibitory activity toward the PI3K/AKT signaling pathway and which has the ability to induce apoptosis of A549 lung cancer cells. Within the pathway, cooperation of the hybrid PKS-NRPS xenE and the trans-acting enoyl reductase xenG is responsible for the formation of the reduced tyrosine-nonaketide derivative. The alpha/beta hydrolase xenA then accelerates intramolecular nucleophilic attack to give a pyrrolidone derivative. Subsequently, three enzymes, xenF, xenD, and xenC, coordinately participate in the conversion to xenoacremone B. XenF catalyzes sigmatropic rearrangement to form an A-ring, which leads to an unusual intermediate with a hexane ring, which is required for the formation of the tricarbocyclic product. Epoxidation catalyzed by xenD and the formation of the paracyclophane ether catalyzed by xenC initiate a spontaneous intramolecular Diels-Alder (IMDA) reaction to yield xenoacremone B. Spontaneous hydration of xenoacremone B leads to the formation of xenoacremone A, which undergoes subsequent methylation to afford xenoacremone C. This chain is Hexane cyclase xenF, found in Xenoacremonium sinensis (Endophyte fungus).